Reading from the N-terminus, the 25-residue chain is Caerin 2.1 (25 aa).

In terms of tissue distribution, expressed by the skin dorsal glands.

It is found in the secreted. Its function is as follows. Antibacterial peptide with narrow spectrum of activity. Active against the Gram-negative bacterium P.multocida (MIC=25 ug/ml). Inhibits the formation of NO by neuronal nitric oxide synthase with an IC(50) of 9 ug/ml. The protein is Caerin 2.1 of Litoria peronii (Emerald spotted tree frog).